A 199-amino-acid chain; its full sequence is MKRLILASSSPRRIELLKQFGIEFEIIPSNIDESIDQSLSVEENVMQLAKKKAQEVFNKLREENKHFLVIAADTLVFVEGVILGKPSNEDEAFWMLRKISGKWHSVYTGVCIIDGPRERILVEYEKSNVYIKHMSDEEILRYISTKEPFDKAGAYAIQGFGSLIVERIDGCFYNVVGLPLYRLNIMLQKLGYDLMKGEL.

Asp73 serves as the catalytic Proton acceptor.

It belongs to the Maf family. YhdE subfamily. Requires a divalent metal cation as cofactor.

The protein localises to the cytoplasm. It carries out the reaction dTTP + H2O = dTMP + diphosphate + H(+). The enzyme catalyses UTP + H2O = UMP + diphosphate + H(+). Its function is as follows. Nucleoside triphosphate pyrophosphatase that hydrolyzes dTTP and UTP. May have a dual role in cell division arrest and in preventing the incorporation of modified nucleotides into cellular nucleic acids. In Caldicellulosiruptor bescii (strain ATCC BAA-1888 / DSM 6725 / KCTC 15123 / Z-1320) (Anaerocellum thermophilum), this protein is dTTP/UTP pyrophosphatase.